Consider the following 228-residue polypeptide: Abnormal cell migration protein 18 (228 aa).

A signal peptide spans 1–19 (MTFTLRLLVLCTVYSYVIS). Asn-135 and Asn-159 each carry an N-linked (GlcNAc...) asparagine glycan.

As to expression, expressed in body wall muscle.

Its subcellular location is the secreted. The protein resides in the extracellular space. The protein localises to the extracellular matrix. It is found in the basement membrane. Functionally, required for the directional control of distal tip cell migration during gonadogenesis, probably by recruiting fibulin fbl-1 to the gonad basement membrane. This is Abnormal cell migration protein 18 from Caenorhabditis elegans.